A 921-amino-acid polypeptide reads, in one-letter code: Isoleucine--tRNA ligase (921 aa).

The short motif at P59–H69 is the 'HIGH' region element. Position 569 (E569) interacts with L-isoleucyl-5'-AMP. Positions K610 to S614 match the 'KMSKS' region motif. K613 is a binding site for ATP. Residues C896, C899, C911, and C914 each contribute to the Zn(2+) site.

It belongs to the class-I aminoacyl-tRNA synthetase family. IleS type 1 subfamily. In terms of assembly, monomer. It depends on Zn(2+) as a cofactor.

Its subcellular location is the cytoplasm. It catalyses the reaction tRNA(Ile) + L-isoleucine + ATP = L-isoleucyl-tRNA(Ile) + AMP + diphosphate. Functionally, catalyzes the attachment of isoleucine to tRNA(Ile). As IleRS can inadvertently accommodate and process structurally similar amino acids such as valine, to avoid such errors it has two additional distinct tRNA(Ile)-dependent editing activities. One activity is designated as 'pretransfer' editing and involves the hydrolysis of activated Val-AMP. The other activity is designated 'posttransfer' editing and involves deacylation of mischarged Val-tRNA(Ile). The chain is Isoleucine--tRNA ligase from Campylobacter hominis (strain ATCC BAA-381 / DSM 21671 / CCUG 45161 / LMG 19568 / NCTC 13146 / CH001A).